We begin with the raw amino-acid sequence, 1137 residues long: Guanine nucleotide exchange factor DBS (1137 aa).

In terms of domain architecture, CRAL-TRIO spans 52–224 (TAMATDEIMH…DLGGTLDYCH (173 aa)). Residues 351–456 (LQLRHFEQGF…IARRRGLLSK (106 aa)) form a Spectrin repeat. Ser-457 and Ser-480 each carry phosphoserine. Positions 503–529 (LETGAENKIQELNAIYKEYESILNQDL) form a coiled coil. The disordered stretch occupies residues 557-625 (LAARQTRPVQ…QGRGSAGEEE (69 aa)). Residues 584-597 (GIRRGSENSSSEGG) show a composition bias toward low complexity. The segment covering 607–616 (AKSEMSESRQ) has biased composition (basic and acidic residues). Ser-620 is subject to Phosphoserine. Positions 631–811 (LRRHVMSELL…LGILKAVNDS (181 aa)) constitute a DH domain. The PH domain maps to 829 to 945 (KLLMQGSFSV…WVNEIRKVLT (117 aa)). Disordered stretches follow at residues 955-1058 (SQHR…LVPG) and 1116-1137 (GPSG…RAHP). A compositionally biased stretch (low complexity) spans 962-977 (QSQSLPLPAPTSTSPS). A phosphoserine mark is found at Ser-1033, Ser-1034, Ser-1041, and Ser-1042. The SH3 domain maps to 1055–1116 (LVPGKYTVVA…PASSLSVRLG (62 aa)). A compositionally biased stretch (polar residues) spans 1119–1128 (GSAQCLSSSG).

Belongs to the MCF2 family. Interacts with GTP-bound RAC1. Interacts with CDC42. Interacts with RHOA. Interacts with CCPG1, which results in specific inhibition of its exchange activity toward RHOA, but does not affect its activity on CDC42.

Its subcellular location is the cytoplasm. The protein resides in the cell membrane. It is found in the endomembrane system. Guanine nucleotide exchange factor that catalyzes guanine nucleotide exchange on RHOA and CDC42, and thereby contributes to the regulation of RHOA and CDC42 signaling pathways. Seems to lack activity with RAC1. Becomes activated and highly tumorigenic by truncation of the N-terminus. Isoform 5 activates CDC42. Functionally, does not catalyze guanine nucleotide exchange on CDC42. The sequence is that of Guanine nucleotide exchange factor DBS (MCF2L) from Homo sapiens (Human).